Here is a 1088-residue protein sequence, read N- to C-terminus: DNA polymerase II large subunit (1088 aa).

Belongs to the archaeal DNA polymerase II family. Heterodimer of a large subunit and a small subunit.

The catalysed reaction is DNA(n) + a 2'-deoxyribonucleoside 5'-triphosphate = DNA(n+1) + diphosphate. It catalyses the reaction Exonucleolytic cleavage in the 3'- to 5'-direction to yield nucleoside 5'-phosphates.. In terms of biological role, possesses two activities: a DNA synthesis (polymerase) and an exonucleolytic activity that degrades single-stranded DNA in the 3'- to 5'-direction. Has a template-primer preference which is characteristic of a replicative DNA polymerase. The polypeptide is DNA polymerase II large subunit (polC) (Thermoplasma volcanium (strain ATCC 51530 / DSM 4299 / JCM 9571 / NBRC 15438 / GSS1)).